The primary structure comprises 1135 residues: Nonribosomal peptide synthetase 9 (1135 aa).

The condensation 1 stretch occupies residues Thr23 to Pro77. The tract at residues Ser177–Thr562 is adenylation. Residues Gly485 to Ser507 are disordered. A compositionally biased stretch (low complexity) spans Gly491–Arg502. In terms of domain architecture, Carrier spans Ala672–Gln748. The residue at position 709 (Ser709) is an O-(pantetheine 4'-phosphoryl)serine. Residues Asp746–Val999 are condensation 2.

The protein belongs to the NRP synthetase family.

Nonribosomal peptide synthesis (NRPS) is a key mechanism responsible for the biosynthesis of bioactive metabolites which are potentially contributing to organismal virulence. In Aspergillus fumigatus (strain ATCC MYA-4609 / CBS 101355 / FGSC A1100 / Af293) (Neosartorya fumigata), this protein is Nonribosomal peptide synthetase 9 (NRPS9).